Consider the following 37-residue polypeptide: Large ribosomal subunit protein bL36c (37 aa).

It belongs to the bacterial ribosomal protein bL36 family.

The protein localises to the plastid. The protein resides in the chloroplast. This chain is Large ribosomal subunit protein bL36c, found in Phaeodactylum tricornutum (strain CCAP 1055/1).